A 275-amino-acid polypeptide reads, in one-letter code: Phage-like element PBSX protein XkdF (275 aa).

Residues 247 to 275 (KARGASKQTADDTGGNTEQVKKSIWSGLL) form a disordered region.

To B.subtilis YqbD.

This is Phage-like element PBSX protein XkdF (xkdF) from Bacillus subtilis (strain 168).